The sequence spans 397 residues: MTIRNQRFSLLKQPIYSTLNQHLIDYPTPSNLSYWWGFGSLAGICLVIQIVTGVFLAMHYTPHVDLAFNSVEHIMRDVEGGWLLRYMHANGASMFFIVVYLHIFRGLYYASYSSPREFVWCLGVVIFLLMIVTAFIGYVLPWGQMSFWGATVITSLASAIPVVGDTIVTWLWGGFSVDNATLNRFFSLHYLLPFILVGASLLHLAALHQYGSNNPLGVHSEMDKIAFYPYFYVKDLVGWVAFAIFFSIWIFFAPNVLGHPDNYIPANPMSTPPHIVPEWYFLPIYAILRSIPDKAGGVAAIALVFISLLALPFFKEMYVRSSSFRPIYQGIFWLLLADCLLLGWIGCQPVEAPFVTIGQISSFFFFLFFAITPILGRVGRGIPKYYTDETHRTGSVS.

Transmembrane regions (helical) follow at residues F38 to M58, W82 to F104, V119 to V139, and F185 to A205. H88 and H102 together coordinate heme b. Positions 189 and 203 each coordinate heme b. H208 is a binding site for a ubiquinone. 4 helical membrane passes run F231–F251, A295–K315, I327–C347, and F354–P373.

It belongs to the cytochrome b family. As to quaternary structure, the main subunits of complex b-c1 are: cytochrome b, cytochrome c1 and the Rieske protein. Requires heme b as cofactor.

The protein localises to the mitochondrion inner membrane. Component of the ubiquinol-cytochrome c reductase complex (complex III or cytochrome b-c1 complex) that is part of the mitochondrial respiratory chain. The b-c1 complex mediates electron transfer from ubiquinol to cytochrome c. Contributes to the generation of a proton gradient across the mitochondrial membrane that is then used for ATP synthesis. In Oryza sativa subsp. japonica (Rice), this protein is Cytochrome b (MT-CYB).